Reading from the N-terminus, the 128-residue chain is Con-Ins F2b (128 aa).

A signal peptide spans 1-24; the sequence is MTTSSYFLLVALGLLLYVCRSSFG. 4 disulfides stabilise this stretch: Cys29–Cys104, Cys41–Cys107, Cys53–Cys120, and Cys106–Cys111. Positions 59–89 are cleaved as a propeptide — c peptide; that stretch reads LQGGTGKKRGRASLLRKRRAFLSMLKARAKR. The residue at position 115 (Glu115) is a 4-carboxyglutamate; partial. At Ser127 the chain carries Serine amide.

Belongs to the insulin family. In terms of assembly, heterodimer of A and B chains; disulfide-linked. Expressed by the venom gland.

The protein resides in the secreted. In terms of biological role, this venom insulin facilitates prey capture by rapidly inducing hypoglycemic shock. Intraperitoneal injection of this peptide into zebrafish lowers blood glucose with the same potency than human insulin. In vivo, when applied to water, this peptide reduces overall locomotor activity of zebrafish larvae, observed as a significant decrease in the percentage of time spent swimming and movement frequency. This chain is Con-Ins F2b, found in Conus floridulus (Cone snail).